The chain runs to 451 residues: L,D-transpeptidase 5 (451 aa).

A L,D-TPase catalytic domain is found at 263 to 384 (QVVKAEVSSH…AVYGDPVEVT (122 aa)). Substrate is bound by residues Y323 and 337–338 (NG). Catalysis depends on H342, which acts as the Proton donor/acceptor. C360 acts as the Nucleophile in catalysis. N362 contacts substrate. Residues 417 to 451 (AAKPAATQIPVTAPVTPSDAPTPSGTPTTTNGPGG) are disordered. Positions 437-451 (PTPSGTPTTTNGPGG) are enriched in low complexity.

It functions in the pathway cell wall biogenesis; peptidoglycan biosynthesis. Its activity is regulated as follows. In contrast to other LDT paralogs, LdtMt5 is not inactivated by the beta-lactam carbapenems; beta-lactam carbapenems form covalent adducts with other LDT paralogs but the formation of covalent adducts was not detected for LdtMt5. Functionally, generates 3-&gt;3 cross-links in peptidoglycan, catalyzing the cleavage of the mDap(3)-D-Ala(4) bond of a tetrapeptide donor stem and the formation of a bond between the carbonyl of mDap(3) of the donor stem and the side chain of mDap(3) of the acceptor stem. Is specific for donor substrates containing a stem tetrapeptide since it cannot use pentapeptide stems. The chain is L,D-transpeptidase 5 (lprQ) from Mycobacterium tuberculosis (strain ATCC 25618 / H37Rv).